The chain runs to 430 residues: Putrescine 2-hydroxylase (430 aa).

Positions 88 to 203 (LYVGHQKLVP…LRDCHGLLFE (116 aa)) constitute a Rieske domain. [2Fe-2S] cluster-binding residues include Cys128, His130, Cys162, and His165.

Belongs to the bacterial ring-hydroxylating dioxygenase alpha subunit family. The cofactor is [2Fe-2S] cluster.

Its function is as follows. Rieske-type iron sulfur protein that can catalyze in vitro the 2-hydroxylation of putrescine, forming 2-hydroxyputrescine. May be involved in the biosynthesis of the cyclic hydroxamate siderophore alcaligin. The chain is Putrescine 2-hydroxylase from Bordetella bronchiseptica (strain ATCC BAA-588 / NCTC 13252 / RB50) (Alcaligenes bronchisepticus).